The chain runs to 292 residues: Elongation factor Ts (292 aa).

An involved in Mg(2+) ion dislocation from EF-Tu region spans residues 79-82; sequence TDFV.

This sequence belongs to the EF-Ts family.

The protein resides in the cytoplasm. Its function is as follows. Associates with the EF-Tu.GDP complex and induces the exchange of GDP to GTP. It remains bound to the aminoacyl-tRNA.EF-Tu.GTP complex up to the GTP hydrolysis stage on the ribosome. The protein is Elongation factor Ts of Metamycoplasma arthritidis (strain 158L3-1) (Mycoplasma arthritidis).